Here is a 100-residue protein sequence, read N- to C-terminus: Toxin Rv0299 (100 aa).

In terms of biological role, toxic component of a type II toxin-antitoxin (TA) system. Upon expression in M.smegmatis inhibits colony formation. Its toxic effect is neutralized by coexpression with cognate antitoxin Rv0298/MT0312. This is Toxin Rv0299 from Mycobacterium tuberculosis (strain ATCC 25618 / H37Rv).